Consider the following 493-residue polypeptide: MNKQASQPRAIYYVVALQIWEYFSFYGMRALLILYLTNQLKYDDNHAYELFSAYCSLVYVTPILGGYLADKVLGNRMAVMLGAFLMAIGHLVLGASEIAPTFLYLSLAIIVCGYGLFKSNISCLLGELYQPEDPRRDGGFSLLYAAGNIGSIVAPIACGYVQEEYSWAMGFALAAIGMLAGLVIFLCGNRHFTHTTGVNKAVLCARNYLLPNWGWLLILLVAAPLLITVLFWKEWSVYALIVATAISLVVLAKIYRQAQTAKQRKELGLIVTLTLFSMLFWAFAQQGGSSISLYIDRFVNRDILGYSVPTAMFQSVNAFAVMLCGVVLAWLVKESVSGNRTVRIWGKFALGLGLMSAGFCILTLSARWSAAYGHSSMPLMVLGLAVMGFAELFIDPVAMSQITRIDIPGVTGVLTGIYMLLSGAIANYLAGVIADQTSQSAFDASGAVNYAINAYVDVFEQITWGALACVGVVLLIWLYQSFKFKSRALAVES.

Helical transmembrane passes span 14–34 (VVAL…LLIL), 49–69 (ELFS…GYLA), 91–111 (LVLG…AIIV), 138–158 (GGFS…PIAC), 167–187 (WAMG…IFLC), 212–232 (NWGW…VLFW), 235–255 (WSVY…AKIY), 267–287 (LGLI…AQQG), 312–332 (MFQS…AWLV), 344–364 (IWGK…ILTL), 379–399 (LMVL…PVAM), 413–433 (VLTG…AGVI), and 458–478 (VFEQ…LIWL).

This sequence belongs to the major facilitator superfamily. Proton-dependent oligopeptide transporter (POT/PTR) (TC 2.A.17) family. DtpD subfamily.

The protein resides in the cell inner membrane. In terms of biological role, probable proton-dependent permease that transports dipeptides. The sequence is that of Dipeptide permease D from Salmonella paratyphi C (strain RKS4594).